Consider the following 496-residue polypeptide: Omega-crystallin (496 aa).

This sequence belongs to the aldehyde dehydrogenase family. Lens.

Functionally, omega-crystallins are structural components of squids and octopi eye lens. Contains relatively little if any DHAL activity. The protein is Omega-crystallin of Enteroctopus dofleini (North Pacific giant octopus).